The following is a 279-amino-acid chain: Acetyl-coenzyme A carboxylase carboxyl transferase subunit beta (279 aa).

The region spanning 23-279 is the CoA carboxyltransferase N-terminal domain; that stretch reads LWWKCESCGA…LSQILGHLSS (257 aa). Zn(2+) contacts are provided by C27, C30, C46, and C49. The C4-type zinc finger occupies 27–49; it reads CESCGAMLHKKQVEDHFYTCCEC.

It belongs to the AccD/PCCB family. Acetyl-CoA carboxylase is a heterohexamer composed of biotin carboxyl carrier protein (AccB), biotin carboxylase (AccC) and two subunits each of ACCase subunit alpha (AccA) and ACCase subunit beta (AccD). The cofactor is Zn(2+).

Its subcellular location is the cytoplasm. The enzyme catalyses N(6)-carboxybiotinyl-L-lysyl-[protein] + acetyl-CoA = N(6)-biotinyl-L-lysyl-[protein] + malonyl-CoA. The protein operates within lipid metabolism; malonyl-CoA biosynthesis; malonyl-CoA from acetyl-CoA: step 1/1. Component of the acetyl coenzyme A carboxylase (ACC) complex. Biotin carboxylase (BC) catalyzes the carboxylation of biotin on its carrier protein (BCCP) and then the CO(2) group is transferred by the transcarboxylase to acetyl-CoA to form malonyl-CoA. The sequence is that of Acetyl-coenzyme A carboxylase carboxyl transferase subunit beta from Prosthecochloris aestuarii (strain DSM 271 / SK 413).